Reading from the N-terminus, the 200-residue chain is Small ribosomal subunit protein uS5 (200 aa).

Positions Met1–Gln12 are enriched in polar residues. The disordered stretch occupies residues Met1–Gln49. Gly residues predominate over residues Gly13–Ser27. Residues Thr29–Gln49 show a composition bias toward basic and acidic residues. In terms of domain architecture, S5 DRBM spans Ile48–Val111.

This sequence belongs to the universal ribosomal protein uS5 family. In terms of assembly, part of the 30S ribosomal subunit. Contacts proteins S4 and S8.

With S4 and S12 plays an important role in translational accuracy. In terms of biological role, located at the back of the 30S subunit body where it stabilizes the conformation of the head with respect to the body. The chain is Small ribosomal subunit protein uS5 from Rubrobacter xylanophilus (strain DSM 9941 / JCM 11954 / NBRC 16129 / PRD-1).